A 145-amino-acid chain; its full sequence is D-aminoacyl-tRNA deacylase (145 aa).

The short motif at 137-138 (GP) is the Gly-cisPro motif, important for rejection of L-amino acids element.

Belongs to the DTD family. In terms of assembly, homodimer.

It localises to the cytoplasm. The enzyme catalyses glycyl-tRNA(Ala) + H2O = tRNA(Ala) + glycine + H(+). The catalysed reaction is a D-aminoacyl-tRNA + H2O = a tRNA + a D-alpha-amino acid + H(+). An aminoacyl-tRNA editing enzyme that deacylates mischarged D-aminoacyl-tRNAs. Also deacylates mischarged glycyl-tRNA(Ala), protecting cells against glycine mischarging by AlaRS. Acts via tRNA-based rather than protein-based catalysis; rejects L-amino acids rather than detecting D-amino acids in the active site. By recycling D-aminoacyl-tRNA to D-amino acids and free tRNA molecules, this enzyme counteracts the toxicity associated with the formation of D-aminoacyl-tRNA entities in vivo and helps enforce protein L-homochirality. The chain is D-aminoacyl-tRNA deacylase from Shewanella amazonensis (strain ATCC BAA-1098 / SB2B).